A 70-amino-acid polypeptide reads, in one-letter code: Large ribosomal subunit protein bL31 (70 aa).

Positions 16, 18, 37, and 40 each coordinate Zn(2+).

The protein belongs to the bacterial ribosomal protein bL31 family. Type A subfamily. In terms of assembly, part of the 50S ribosomal subunit. The cofactor is Zn(2+).

Its function is as follows. Binds the 23S rRNA. The polypeptide is Large ribosomal subunit protein bL31 (Haemophilus ducreyi (strain 35000HP / ATCC 700724)).